Here is a 381-residue protein sequence, read N- to C-terminus: Ecotin-like protein 3 (381 aa).

The disordered stretch occupies residues 232–381; sequence EHLEVCPKNN…GSKADPVDGK (150 aa). Positions 273–292 are enriched in polar residues; sequence NESSPSRPRLSSTAYWPQEN. The span at 336–347 shows a compositional bias: basic and acidic residues; sequence RKAEDDVYEKTM. Residues 363 to 372 are compositionally biased toward polar residues; the sequence is SASSTKSGNG.

The protein belongs to the protease inhibitor I11 (ecotin) family.

In Leishmania major, this protein is Ecotin-like protein 3.